A 512-amino-acid polypeptide reads, in one-letter code: Histidine ammonia-lyase (512 aa).

The 5-imidazolinone (Ala-Gly) cross-link spans Ala141–Gly143. Ser142 is modified (2,3-didehydroalanine (Ser)).

It belongs to the PAL/histidase family. In terms of processing, contains an active site 4-methylidene-imidazol-5-one (MIO), which is formed autocatalytically by cyclization and dehydration of residues Ala-Ser-Gly.

It localises to the cytoplasm. The catalysed reaction is L-histidine = trans-urocanate + NH4(+). It functions in the pathway amino-acid degradation; L-histidine degradation into L-glutamate; N-formimidoyl-L-glutamate from L-histidine: step 1/3. The sequence is that of Histidine ammonia-lyase from Bacillus velezensis (strain DSM 23117 / BGSC 10A6 / LMG 26770 / FZB42) (Bacillus amyloliquefaciens subsp. plantarum).